The chain runs to 746 residues: Long-chain-alcohol oxidase FAO3 (746 aa).

A helical transmembrane segment spans residues 139–159 (ILTPIRAAFVYIKVAFLFCFF). 233–248 (CDVVVVGSGSGGGVAA) provides a ligand contact to FAD. Catalysis depends on H677, which acts as the Proton acceptor.

Belongs to the GMC oxidoreductase family.

It is found in the membrane. It carries out the reaction a long-chain primary fatty alcohol + O2 = a long-chain fatty aldehyde + H2O2. Its function is as follows. Long-chain fatty alcohol oxidase involved in the omega-oxidation pathway of lipid degradation. The chain is Long-chain-alcohol oxidase FAO3 (FAO3) from Arabidopsis thaliana (Mouse-ear cress).